An 837-amino-acid chain; its full sequence is E3 ubiquitin-protein ligase bre-1 (837 aa).

Positions 1–33 (MMKRSNEGIGGENYASSPSDDGQQKRRKIQFEP) are disordered. The interval 1–313 (MMKRSNEGIG…AKEIENLRLE (313 aa)) is interaction with ubc-1. 2 coiled-coil regions span residues 54–89 (TSKLKQQLLYKNKRIAELEKENERSKRRQQTDESNF) and 185–253 (HKEL…KHMR). A disordered region spans residues 269–302 (GQSGGNGGATPSSSGTTNATEKKISAPDIPPSET). Residues 277-287 (ATPSSSGTTNA) are compositionally biased toward polar residues. 3 coiled-coil regions span residues 300–397 (SETA…AFRS), 458–651 (DEMK…KAQT), and 677–763 (VQFK…NESV). Residues 785 to 824 (CPSCKTRPKDCIMLKCYHLFCETCIKTMYDTRQRKCPKCN) form an RING-type zinc finger.

Belongs to the BRE1 family. Interacts with ubc-1. Interacts with mrg-1. In adult animals, expressed in oocytes, germ cells, pharyngeal and intestinal cells.

It is found in the nucleus. It carries out the reaction S-ubiquitinyl-[E2 ubiquitin-conjugating enzyme]-L-cysteine + [acceptor protein]-L-lysine = [E2 ubiquitin-conjugating enzyme]-L-cysteine + N(6)-ubiquitinyl-[acceptor protein]-L-lysine.. Its pathway is protein modification; protein ubiquitination. E3 ubiquitin-protein ligase that mediates monoubiquitination of 'Lys-117' of histone H2B. H2B 'Lys-117' ubiquitination gives a specific tag for epigenetic transcriptional activation and is also prerequisite for histone H3 'Lys-4' and 'Lys-79' methylation. Involved in regulating stem cell proliferative fate. This is E3 ubiquitin-protein ligase bre-1 (rfp-1) from Caenorhabditis elegans.